The sequence spans 317 residues: Transaldolase (317 aa).

Residue Lys132 is the Schiff-base intermediate with substrate of the active site.

The protein belongs to the transaldolase family. Type 1 subfamily. As to quaternary structure, homodimer.

The protein localises to the cytoplasm. The enzyme catalyses D-sedoheptulose 7-phosphate + D-glyceraldehyde 3-phosphate = D-erythrose 4-phosphate + beta-D-fructose 6-phosphate. It functions in the pathway carbohydrate degradation; pentose phosphate pathway; D-glyceraldehyde 3-phosphate and beta-D-fructose 6-phosphate from D-ribose 5-phosphate and D-xylulose 5-phosphate (non-oxidative stage): step 2/3. Its function is as follows. Transaldolase is important for the balance of metabolites in the pentose-phosphate pathway. The polypeptide is Transaldolase (Haemophilus influenzae (strain 86-028NP)).